The sequence spans 482 residues: Glutamyl-tRNA(Gln) amidotransferase subunit A (482 aa).

Residues Lys75 and Ser150 each act as charge relay system in the active site. Catalysis depends on Ser174, which acts as the Acyl-ester intermediate.

Belongs to the amidase family. GatA subfamily. Heterotrimer of A, B and C subunits.

It catalyses the reaction L-glutamyl-tRNA(Gln) + L-glutamine + ATP + H2O = L-glutaminyl-tRNA(Gln) + L-glutamate + ADP + phosphate + H(+). Allows the formation of correctly charged Gln-tRNA(Gln) through the transamidation of misacylated Glu-tRNA(Gln) in organisms which lack glutaminyl-tRNA synthetase. The reaction takes place in the presence of glutamine and ATP through an activated gamma-phospho-Glu-tRNA(Gln). This is Glutamyl-tRNA(Gln) amidotransferase subunit A from Rippkaea orientalis (strain PCC 8801 / RF-1) (Cyanothece sp. (strain PCC 8801)).